The primary structure comprises 105 residues: Keratin-associated protein 17-1 (105 aa).

As to quaternary structure, interacts with hair keratins.

In the hair cortex, hair keratin intermediate filaments are embedded in an interfilamentous matrix, consisting of hair keratin-associated proteins (KRTAP), which are essential for the formation of a rigid and resistant hair shaft through their extensive disulfide bond cross-linking with abundant cysteine residues of hair keratins. The matrix proteins include the high-sulfur and high-glycine-tyrosine keratins. The chain is Keratin-associated protein 17-1 (KRTAP17-1) from Homo sapiens (Human).